The sequence spans 872 residues: Alanine--tRNA ligase (872 aa).

Residues His-567, His-571, Cys-669, and His-673 each coordinate Zn(2+).

It belongs to the class-II aminoacyl-tRNA synthetase family. Zn(2+) serves as cofactor.

Its subcellular location is the cytoplasm. It catalyses the reaction tRNA(Ala) + L-alanine + ATP = L-alanyl-tRNA(Ala) + AMP + diphosphate. Catalyzes the attachment of alanine to tRNA(Ala) in a two-step reaction: alanine is first activated by ATP to form Ala-AMP and then transferred to the acceptor end of tRNA(Ala). Also edits incorrectly charged Ser-tRNA(Ala) and Gly-tRNA(Ala) via its editing domain. The chain is Alanine--tRNA ligase from Streptococcus agalactiae serotype Ia (strain ATCC 27591 / A909 / CDC SS700).